The sequence spans 263 residues: tRNA (guanine-N(7)-)-methyltransferase (263 aa).

Residues 1 to 39 (MVHHGQMHAQPGVGLRPDTPVASGQLPSTSIRSRRSGIS) form a disordered region. 4 residues coordinate S-adenosyl-L-methionine: E82, D107, N136, and D159. D159 is a catalytic residue. Substrate contacts are provided by residues K163, D195, and 232–235 (TKYE).

This sequence belongs to the class I-like SAM-binding methyltransferase superfamily. TrmB family.

It carries out the reaction guanosine(46) in tRNA + S-adenosyl-L-methionine = N(7)-methylguanosine(46) in tRNA + S-adenosyl-L-homocysteine. It functions in the pathway tRNA modification; N(7)-methylguanine-tRNA biosynthesis. Functionally, catalyzes the formation of N(7)-methylguanine at position 46 (m7G46) in tRNA. The sequence is that of tRNA (guanine-N(7)-)-methyltransferase from Mycobacterium bovis (strain ATCC BAA-935 / AF2122/97).